The sequence spans 328 residues: DNA-directed RNA polymerase subunit alpha (328 aa).

The tract at residues 1 to 234 (MQNSTTEFLK…DQMSIFADLQ (234 aa)) is alpha N-terminal domain (alpha-NTD). Residues 248–328 (IDPVLLRPVD…AWPPVGLEKP (81 aa)) are alpha C-terminal domain (alpha-CTD).

This sequence belongs to the RNA polymerase alpha chain family. As to quaternary structure, homodimer. The RNAP catalytic core consists of 2 alpha, 1 beta, 1 beta' and 1 omega subunit. When a sigma factor is associated with the core the holoenzyme is formed, which can initiate transcription.

It carries out the reaction RNA(n) + a ribonucleoside 5'-triphosphate = RNA(n+1) + diphosphate. Functionally, DNA-dependent RNA polymerase catalyzes the transcription of DNA into RNA using the four ribonucleoside triphosphates as substrates. This is DNA-directed RNA polymerase subunit alpha from Neisseria meningitidis serogroup A / serotype 4A (strain DSM 15465 / Z2491).